We begin with the raw amino-acid sequence, 287 residues long: F-actin-capping protein subunit beta (287 aa).

Ser2 is modified (N-acetylserine). 2 positions are modified to phosphoserine: Ser85 and Ser92.

Belongs to the F-actin-capping protein beta subunit family. In terms of assembly, component of the F-actin capping complex, composed of a heterodimer of an alpha and a beta subunit. Interacts with BSP1 (via C-terminus); leading to recruitment of the F-actin capping complex to actin cortical patches and the acomyosin contractile ring.

It localises to the cytoplasm. The protein localises to the cytoskeleton. Its subcellular location is the actin patch. The protein resides in the bud. It is found in the bud tip. F-actin-capping proteins bind in a Ca(2+)-independent manner to the fast growing ends of actin filaments (barbed end) thereby blocking the exchange of subunits at these ends. Unlike other capping proteins (such as gelsolin and severin), these proteins do not sever actin filaments. In Saccharomyces cerevisiae (strain ATCC 204508 / S288c) (Baker's yeast), this protein is F-actin-capping protein subunit beta (CAP2).